The following is a 44-amino-acid chain: Photosystem I reaction center subunit IX (44 aa).

The chain crosses the membrane as a helical span at residues Tyr-7–Ile-27.

Belongs to the PsaJ family.

Its subcellular location is the plastid. It is found in the chloroplast thylakoid membrane. May help in the organization of the PsaE and PsaF subunits. This Coffea arabica (Arabian coffee) protein is Photosystem I reaction center subunit IX.